The chain runs to 740 residues: MESLIKSQHAQQLAGHKNTTGKTPSMEMIPATGLAMSSDESMMLKLIQQTHSPDAREVQVRGLLSLVEDILDRATLDSEDTNASMLPLPTEDKLMQSSMMSVLDSVSYAIDRVACEIAYKSLTGSDSHEITMSVFEHLSSFQWDGKLVLTLAAFALNYGEFWLLVQFYSKNQLAKSLAMLKLVPVQNRVTLESVSQGLNDLIREMKSVTACVVELSELPDRYITPDVPQLSRILSTIPIAVYWTIRSVIACISQINMITAMGHEMMNTQMDLWETSMLANKLKNIHDHLAETLRLCYRHIEKQRSSESLKVLHSLFDTTHIDNMKILTALVHPKPHITPLQDGLTKRKVHLDVLRRKTVLLLISDLNILQDELSIFEQIYTESRRNLVGVDGKSHMPYEVVWVPVVDPIEDFERSPILQKKFEDLRDPMPWYSVDSPKLIERHVVEFMRGRWHFMNKPILVVIDPQGNEASLNALHMIWIWGTEAFPFTRSREEELWRRETFSLNLIVDGIDSVIFNWIKPDNYIFLYGGDDLDWIRRFTMAAKATAKDSNVNLEMAYVGKRNHSHREQIRRISEVIRSENLSHSWAEPALMWFFWTRLESMLYSKIQLGKADDHDDVMQGIKKILSYDKLGGWALLSKGPEIVMIAHGAIERTMSVYDRTWKTHVPTKGYTKAMSDHHHDEVLRETGKPCGHFDFHITARSGRIPEKMNCFECQRPMEKYMSFSCCHDEKLHEDENYNF.

Over residues 1 to 23 (MESLIKSQHAQQLAGHKNTTGKT) the composition is skewed to polar residues. A disordered region spans residues 1 to 27 (MESLIKSQHAQQLAGHKNTTGKTPSME).

Can form homodimer. In terms of tissue distribution, expressed in phloem sieve elements.

In terms of biological role, scaffold protein required to form the phloem filament matrix in sieve elements. The protein is Protein SIEVE ELEMENT OCCLUSION B of Arabidopsis thaliana (Mouse-ear cress).